Reading from the N-terminus, the 236-residue chain is MTNLDAKSIIEYIGNAPKKTPVKVFIKGNLDQLNFPNTIENFTEQHSGIIFGDWKDVEPFLNDNKEKIVQYRIENDVRNSAVPLIDLKKFNARIEPGAIIRDQVAIGKNAVIMMGAIINIGAEIGDDTMIDMGVVLGGRAIVGKHCHIGAGSVLAGVIEPASAKPVQIDDDVVIGANAVVIEGIHVGKGAVIAAGAIVTKDVEPYTMVAGVPAKVIKKVDNKTLDKTGLEDDLRKI.

Belongs to the transferase hexapeptide repeat family. DapH subfamily.

The catalysed reaction is (S)-2,3,4,5-tetrahydrodipicolinate + acetyl-CoA + H2O = L-2-acetamido-6-oxoheptanedioate + CoA. Its pathway is amino-acid biosynthesis; L-lysine biosynthesis via DAP pathway; LL-2,6-diaminopimelate from (S)-tetrahydrodipicolinate (acetylase route): step 1/3. In terms of biological role, catalyzes the transfer of an acetyl group from acetyl-CoA to tetrahydrodipicolinate. In Lactobacillus acidophilus (strain ATCC 700396 / NCK56 / N2 / NCFM), this protein is 2,3,4,5-tetrahydropyridine-2,6-dicarboxylate N-acetyltransferase.